The following is a 259-amino-acid chain: Apolipoprotein A-I (259 aa).

The first 18 residues, 1–18, serve as a signal peptide directing secretion; the sequence is MKAAVLAVALVFLTGCQA. Repeat copies occupy residues 67-88 and 89-110. The tract at residues 67 to 259 is 10 X approximate tandem repeats; sequence LNLLDNWDTL…IDEAKKKLNA (193 aa). Methionine 109 carries the post-translational modification Methionine sulfoxide. The 3; half-length repeat unit spans residues 111 to 121; that stretch reads KDLENVKQKMQ. Repeat unit 4 spans residues 122-143; that stretch reads PHLDEFQEKWNEEVEAYRQKLE. Residues 144–161 form a 5; truncated repeat; it reads PLGTELHKNAKEMQRHLK. Copy 6 of the repeat occupies 162–183; that stretch reads VVAEEFRDRMRVNADALRAKFG. One copy of the 7; truncated repeat lies at 184 to 203; sequence LYSDQMRENLAQRLTEIKNH. Position 189 is a methionine sulfoxide (methionine 189). Repeat unit 8 spans residues 204–225; it reads PTLIEYHTKASDHLKTLGEKAK. A 9; half-length repeat occupies 226–236; the sequence is PALDDLGQGLM. Methionine 236 is subject to Methionine sulfoxide. Repeat unit 10 spans residues 237 to 259; sequence PVLEAWKAKIMSMIDEAKKKLNA.

The protein belongs to the apolipoprotein A1/A4/E family. As to quaternary structure, homodimer. Interacts with APOA1BP and CLU. Component of a sperm activating protein complex (SPAP), consisting of APOA1, an immunoglobulin heavy chain, an immunoglobulin light chain and albumin. Interacts with NDRG1. Interacts with SCGB3A2. Interacts with NAXE and YJEFN3. Glycosylated. In terms of processing, palmitoylated. Post-translationally, phosphorylation sites are present in the extracellular medium. Major protein of plasma HDL, also found in chylomicrons.

The protein localises to the secreted. Its function is as follows. Participates in the reverse transport of cholesterol from tissues to the liver for excretion by promoting cholesterol efflux from tissues and by acting as a cofactor for the lecithin cholesterol acyltransferase (LCAT). As part of the SPAP complex, activates spermatozoa motility. This Rattus norvegicus (Rat) protein is Apolipoprotein A-I (Apoa1).